Consider the following 295-residue polypeptide: Shikimate dehydrogenase (NADP(+)) (295 aa).

Residues 18 to 20 and Thr66 each bind shikimate; that span reads SRS. The Proton acceptor role is filled by Lys70. Residues Asn91 and Asp106 each contribute to the shikimate site. Residues 130–134 and Met235 contribute to the NADP(+) site; that span reads GNGGA. Residue Tyr237 coordinates shikimate. Position 258 (Gly258) interacts with NADP(+).

This sequence belongs to the shikimate dehydrogenase family. Homodimer.

It carries out the reaction shikimate + NADP(+) = 3-dehydroshikimate + NADPH + H(+). Its pathway is metabolic intermediate biosynthesis; chorismate biosynthesis; chorismate from D-erythrose 4-phosphate and phosphoenolpyruvate: step 4/7. Involved in the biosynthesis of the chorismate, which leads to the biosynthesis of aromatic amino acids. Catalyzes the reversible NADPH linked reduction of 3-dehydroshikimate (DHSA) to yield shikimate (SA). The polypeptide is Shikimate dehydrogenase (NADP(+)) (Chlorobium phaeobacteroides (strain DSM 266 / SMG 266 / 2430)).